A 128-amino-acid polypeptide reads, in one-letter code: Sulfurtransferase TusD (128 aa).

Residue cysteine 78 is the Cysteine persulfide intermediate of the active site.

The protein belongs to the DsrE/TusD family. As to quaternary structure, heterohexamer, formed by a dimer of trimers. The hexameric TusBCD complex contains 2 copies each of TusB, TusC and TusD. The TusBCD complex interacts with TusE.

The protein localises to the cytoplasm. Its function is as follows. Part of a sulfur-relay system required for 2-thiolation of 5-methylaminomethyl-2-thiouridine (mnm(5)s(2)U) at tRNA wobble positions. Accepts sulfur from TusA and transfers it in turn to TusE. In Escherichia coli (strain K12 / MC4100 / BW2952), this protein is Sulfurtransferase TusD.